The chain runs to 430 residues: Tol-Pal system protein TolB (430 aa).

The N-terminal stretch at M1 to A21 is a signal peptide.

The protein belongs to the TolB family. The Tol-Pal system is composed of five core proteins: the inner membrane proteins TolA, TolQ and TolR, the periplasmic protein TolB and the outer membrane protein Pal. They form a network linking the inner and outer membranes and the peptidoglycan layer.

It is found in the periplasm. In terms of biological role, part of the Tol-Pal system, which plays a role in outer membrane invagination during cell division and is important for maintaining outer membrane integrity. TolB occupies a key intermediary position in the Tol-Pal system because it communicates directly with both membrane-embedded components, Pal in the outer membrane and TolA in the inner membrane. This chain is Tol-Pal system protein TolB, found in Enterobacter sp. (strain 638).